We begin with the raw amino-acid sequence, 528 residues long: Carboxysome shell carbonic anhydrase (528 aa).

The segment at 17–47 is disordered; that stretch reads PIAPNPRWQKENPTAHGSTDTGGFGYNGGNE. Zn(2+) is bound at residue Cys184. Asp186 acts as the Proton acceptor in catalysis. The Zn(2+) site is built by His252 and Cys263.

It belongs to the beta-class carbonic anhydrase family. CsoSCA subfamily. As to quaternary structure, homodimer. The cofactor is Zn(2+).

The protein localises to the carboxysome. It catalyses the reaction hydrogencarbonate + H(+) = CO2 + H2O. Its activity is regulated as follows. Inhibited by ethoxyzolamide and dithiothreitol (in crude extracts upon expression in E.coli). Functionally, reversible hydration of carbon dioxide. This bacteria encodes at least 3 CA enzymes. Essential for chemolithotrophic carbon dioxide fixation, supplies CO(2) to RuBisCO (ribulose bisphosphate carboxylase, cbbL-cbbS) in the carboxysome. This chain is Carboxysome shell carbonic anhydrase, found in Hydrogenovibrio crunogenus (strain DSM 25203 / XCL-2) (Thiomicrospira crunogena).